A 244-amino-acid polypeptide reads, in one-letter code: ATP synthase subunit a, chloroplastic (244 aa).

Transmembrane regions (helical) follow at residues Q35 to V55, V92 to L112, I131 to S151, L196 to L216, and G217 to G237.

The protein belongs to the ATPase A chain family. In terms of assembly, F-type ATPases have 2 components, CF(1) - the catalytic core - and CF(0) - the membrane proton channel. CF(1) has five subunits: alpha(3), beta(3), gamma(1), delta(1), epsilon(1). CF(0) has four main subunits: a, b, b' and c.

It localises to the plastid. The protein localises to the chloroplast thylakoid membrane. In terms of biological role, key component of the proton channel; it plays a direct role in the translocation of protons across the membrane. This Gossypium hirsutum (Upland cotton) protein is ATP synthase subunit a, chloroplastic.